The chain runs to 348 residues: MARQGNFYAVRKGRETGIYNTWNECKNQVDGYGGAIYKKFNSYEQAKSFLGQPNTTSNYGSSTHAGGQVSKPHTTQKRVHRRNRPLHYSSLTSSSACSSLSSANTNTFYSVKSNVPNIESKIFNNWKDCQAYVKHKRGITFKKFEDQLAAENFISGMSAHDYKLMNISKESFESKYKLSSNTMYNKSMNVYCDGSSFGNGTSSSRAGYGAYFEGAPEENISEPLLSGAQTNNRAEIEAVSEALKKIWEKLTNEKEKVNYQIKTDSEYVTKLLNDRYMTYDNKKLEGLPNSDLIVPLVQRFVKVKKYYELNKECFKNNGKFQIEWVKGHDGDPGNEMADFLAKKGASRR.

The span at 54 to 65 (NTTSNYGSSTHA) shows a compositional bias: polar residues. Residues 54-81 (NTTSNYGSSTHAGGQVSKPHTTQKRVHR) are disordered. Residues 184–346 (YNKSMNVYCD…ADFLAKKGAS (163 aa)) form the RNase H type-1 domain. 4 residues coordinate Mg(2+): Asp193, Glu235, Asp264, and Asp338.

Belongs to the RNase H family. Mg(2+) serves as cofactor.

It carries out the reaction Endonucleolytic cleavage to 5'-phosphomonoester.. Functionally, endonuclease that specifically degrades the RNA of RNA-DNA hybrids. The protein is Ribonuclease H (RNH1) of Saccharomyces cerevisiae (strain ATCC 204508 / S288c) (Baker's yeast).